The chain runs to 208 residues: Porimin (208 aa).

Positions 1–26 (MGLGARGAWAALLLGTLQVLALLGAA) are cleaved as a signal peptide. At 27–166 (HESAAMAASA…EAKKGSKFDT (140 aa)) the chain is on the extracellular side. A compositionally biased stretch (polar residues) spans 42–57 (GLPHNSSANSTETLQH). Residues 42–125 (GLPHNSSANS…PKTTSVSQNT (84 aa)) are disordered. N-linked (GlcNAc...) asparagine glycans are attached at residues N46, N50, N64, N68, N83, N96, and N106. Over residues 65-107 (ETSNSTVKPPTSVASDSSNTTVTTMKPTAASNTTTPGMVSTNM) the composition is skewed to polar residues. Residues 108 to 122 (TSTTLKSTPKTTSVS) are compositionally biased toward low complexity. 2 N-linked (GlcNAc...) asparagine glycosylation sites follow: N124 and N138. A helical membrane pass occupies residues 167-187 (GSFVGGIVLTLGVLSILYIGC). The Cytoplasmic segment spans residues 188-208 (KMYYSRRGIRYRTIDEHDAII).

It belongs to the CD164 family. Ubiquitous. Not expressed in ovary. Expressed in keratinocytes.

It is found in the membrane. Functionally, implicated in oncotic cell death, characterized by cell swelling, organelle swelling, vacuolization and increased membrane permeability. This is Porimin (TMEM123) from Homo sapiens (Human).